Consider the following 129-residue polypeptide: Sm-like protein LSM4 (129 aa).

Residues 2–75 form the Sm domain; sequence LPLSLLKTAQ…IKYLRVPDEV (74 aa). Residues 79-90 show a composition bias toward basic and acidic residues; sequence VQEEKTRTDRKP. A disordered region spans residues 79 to 129; it reads VQEEKTRTDRKPPGVGRGRGRGVDDGGARGRGRGTSMGKMGGNRGAGRGRG. Residues 111–129 are compositionally biased toward gly residues; that stretch reads RGTSMGKMGGNRGAGRGRG.

Belongs to the snRNP Sm proteins family. Component of the heptameric LSM1-LSM7 complex that forms a seven-membered ring structure with a donut shape. The LSM subunits are arranged in the order LSM1, LSM2, LSM3, LSM6, LSM5, LSM7 and LSM4. LSM4 subunit interacts only with its two neighboring subunits, LSM1A or LSM1B and LSM7. Component of the heptameric LSM2-LSM8 complex that forms a seven-membered ring structure with a donut shape. The LSM subunits are arranged in the order LSM8, LSM2, LSM3, LSM6, LSM5, LSM7 and LSM4. LSM4 subunit interacts only with its two neighboring subunits, LSM8 and LSM7. Methylated by PMRT15/SKB1 in response to salt stress or abscisic acid (ABA) treatment. As to expression, expressed in roots, leaves, stems, flowers and siliques.

It is found in the cytoplasm. The protein resides in the nucleus. In terms of biological role, component of LSM protein complexes, which are involved in RNA processing. Component of the cytoplasmic LSM1-LSM7 complex which is involved in mRNA degradation by promoting decapping and leading to accurate 5'-3' mRNA decay. The cytoplasmic LSM1-LSM7 complex regulates developmental gene expression by the decapping of specific development-related transcripts. Component of the nuclear LSM2-LSM8 complex which is involved splicing nuclear mRNAs. LSM2-LSM8 binds directly to the U6 small nuclear RNAs (snRNAs) and is essential for accurate splicing of selected development-related mRNAs through the stabilization of the spliceosomal U6 snRNA. Plays a critical role in the regulation of development-related gene expression. This Arabidopsis thaliana (Mouse-ear cress) protein is Sm-like protein LSM4.